The following is a 326-amino-acid chain: B3 domain-containing protein At5g60130 (326 aa).

The segment at residues 12–110 (PKFFKVYLPD…CFHFCIYEHR (99 aa)) is a DNA-binding region (TF-B3). Residues 124-222 (EEIKVESDSD…DEDERQYLDD (99 aa)) are disordered. A compositionally biased stretch (acidic residues) spans 143 to 199 (LSLDEDDDDSDYNCGEDNDSDDYADEAAVEKDDNDADDEDVDNVADDVPVEDDDYVE).

It localises to the nucleus. This is B3 domain-containing protein At5g60130 from Arabidopsis thaliana (Mouse-ear cress).